Consider the following 321-residue polypeptide: PI-PLC X domain-containing protein 3 (321 aa).

The 176-residue stretch at 22 to 197 (SMHSIPLTNL…DYQVLVFYHS (176 aa)) folds into the PI-PLC X-box domain. Residues histidine 37 and histidine 114 contribute to the active site.

As to expression, expressed at highest levels in heart. Also detected in kidney, lung, small intestine and colon. Expressed at very low levels, if any, in leukocytes, thymus and skeletal muscle.

It localises to the cytoplasm. In Homo sapiens (Human), this protein is PI-PLC X domain-containing protein 3 (PLCXD3).